The primary structure comprises 906 residues: Protein kintoun (906 aa).

Residue S376 is modified to Phosphoserine. Disordered stretches follow at residues 614–691 (QQQK…RKQR) and 793–906 (RKKN…DEDM). A compositionally biased stretch (basic residues) spans 618–631 (KLNKKQRKRNKKQR). Residues 639–655 (EELKAAQEELQLQHEKQ) show a composition bias toward basic and acidic residues. Basic residues predominate over residues 793–808 (RKKNQKRRDCKLRAQQ). S812 is subject to Phosphoserine. Residues 837-850 (ANAQYFKQPNNNNG) are compositionally biased toward polar residues. Basic and acidic residues-rich tracts occupy residues 851–865 (HDQD…HDSG) and 875–887 (NNEE…EADA). Positions 894 to 906 (EMDDDDEDEDEDM) are enriched in acidic residues.

This sequence belongs to the PIH1 family. Kintoun subfamily. As to quaternary structure, interacts with Pp1alpha-96A, Pp1-87B, Pp1-13C and flw.

It is found in the cytoplasm. In terms of biological role, required for cytoplasmic pre-assembly of axonemal dyneins, thereby playing a central role in motility in cilia and flagella. Involved in pre-assembly of dynein arm complexes in the cytoplasm before intraflagellar transport loads them for the ciliary compartment. The polypeptide is Protein kintoun (Drosophila virilis (Fruit fly)).